Consider the following 331-residue polypeptide: Tetraacyldisaccharide 4'-kinase (331 aa).

Residue 58–65 (TVGGSGKT) participates in ATP binding.

It belongs to the LpxK family.

It carries out the reaction a lipid A disaccharide + ATP = a lipid IVA + ADP + H(+). The protein operates within glycolipid biosynthesis; lipid IV(A) biosynthesis; lipid IV(A) from (3R)-3-hydroxytetradecanoyl-[acyl-carrier-protein] and UDP-N-acetyl-alpha-D-glucosamine: step 6/6. Transfers the gamma-phosphate of ATP to the 4'-position of a tetraacyldisaccharide 1-phosphate intermediate (termed DS-1-P) to form tetraacyldisaccharide 1,4'-bis-phosphate (lipid IVA). The polypeptide is Tetraacyldisaccharide 4'-kinase (Shewanella denitrificans (strain OS217 / ATCC BAA-1090 / DSM 15013)).